The chain runs to 1211 residues: Diacylglycerol kinase eta (1211 aa).

The segment at Met1 to Glu66 is disordered. Residues Ala19–Gly32 show a composition bias toward low complexity. The segment covering Val52–Lys61 has biased composition (polar residues). The PH domain maps to Thr62–Ser155. Phorbol-ester/DAG-type zinc fingers lie at residues Met172 to Cys222 and Pro244 to Cys295. The DAGKc domain occupies Phe325 to Glu460. Disordered regions lie at residues Ser562–Glu613 and Lys634–Gly694. Composition is skewed to acidic residues over residues Pro576–Leu589 and Tyr653–Glu662. Residues Ser670–Ser691 are compositionally biased toward polar residues. The SAM domain maps to Trp1143–Asn1206.

This sequence belongs to the eukaryotic diacylglycerol kinase family. As to quaternary structure, interacts with RAF1 and BRAF. Homooligomers. Heterooligomers. Oligomerization through the SAM domain inhibits the diacylglycerol kinase activity. Heterooligomerizes with SAM domain-containing isoforms of DGKD. In terms of assembly, does not form homooligomers. In terms of processing, phosphorylated. Phosphorylation does not inhibit catalytic activity. As to expression, widely expressed. Detected in the granulosa cells of the primary and secondary follicles. Expressed in mature follicles and corpus lutea. Expressed in the oviductal epithelium. In the uterus, strongly expressed in the luminal epithelium. Detected in the uterine glands. In terms of tissue distribution, detected in ovary and uterus (at protein level). Specifically expressed in testis. Detected in the inner area of the testis. Strongly expressed in the secondary spermatocytes and the round spermatids and weakly detected in the primary spermatocytes.

Its subcellular location is the cytoplasm. It is found in the cell membrane. The protein localises to the cytoskeleton. It catalyses the reaction a 1,2-diacyl-sn-glycerol + ATP = a 1,2-diacyl-sn-glycero-3-phosphate + ADP + H(+). It carries out the reaction 1,2-di-(9Z-octadecenoyl)-sn-glycerol + ATP = 1,2-di-(9Z-octadecenoyl)-sn-glycero-3-phosphate + ADP + H(+). It functions in the pathway lipid metabolism; glycerolipid metabolism. Functionally, diacylglycerol kinase that converts diacylglycerol/DAG into phosphatidic acid/phosphatidate/PA and regulates the respective levels of these two bioactive lipids. Thereby, acts as a central switch between the signaling pathways activated by these second messengers with different cellular targets and opposite effects in numerous biological processes. Plays a key role in promoting cell growth. Activates the Ras/B-Raf/C-Raf/MEK/ERK signaling pathway induced by EGF. Regulates the recruitment of RAF1 and BRAF from cytoplasm to membranes and their heterodimerization. This Mus musculus (Mouse) protein is Diacylglycerol kinase eta.